A 635-amino-acid chain; its full sequence is 1-deoxy-D-xylulose-5-phosphate synthase (635 aa).

Thiamine diphosphate contacts are provided by residues His-74 and 115–117; that span reads GHA. Asp-146 serves as a coordination point for Mg(2+). Thiamine diphosphate is bound by residues 147-148, Asn-175, Tyr-285, and Glu-367; that span reads GA. Asn-175 provides a ligand contact to Mg(2+).

This sequence belongs to the transketolase family. DXPS subfamily. As to quaternary structure, homodimer. It depends on Mg(2+) as a cofactor. Requires thiamine diphosphate as cofactor.

The catalysed reaction is D-glyceraldehyde 3-phosphate + pyruvate + H(+) = 1-deoxy-D-xylulose 5-phosphate + CO2. The protein operates within metabolic intermediate biosynthesis; 1-deoxy-D-xylulose 5-phosphate biosynthesis; 1-deoxy-D-xylulose 5-phosphate from D-glyceraldehyde 3-phosphate and pyruvate: step 1/1. Catalyzes the acyloin condensation reaction between C atoms 2 and 3 of pyruvate and glyceraldehyde 3-phosphate to yield 1-deoxy-D-xylulose-5-phosphate (DXP). This is 1-deoxy-D-xylulose-5-phosphate synthase from Anaeromyxobacter sp. (strain Fw109-5).